The sequence spans 233 residues: Orotidine 5'-phosphate decarboxylase (233 aa).

Residues D9, K31, D58–T67, T120, R182, Q191, G211, and R212 each bind substrate. K60 (proton donor) is an active-site residue.

This sequence belongs to the OMP decarboxylase family. Type 1 subfamily. As to quaternary structure, homodimer.

The catalysed reaction is orotidine 5'-phosphate + H(+) = UMP + CO2. It participates in pyrimidine metabolism; UMP biosynthesis via de novo pathway; UMP from orotate: step 2/2. Its function is as follows. Catalyzes the decarboxylation of orotidine 5'-monophosphate (OMP) to uridine 5'-monophosphate (UMP). The chain is Orotidine 5'-phosphate decarboxylase from Listeria monocytogenes serovar 1/2a (strain ATCC BAA-679 / EGD-e).